A 536-amino-acid chain; its full sequence is CTP synthase (536 aa).

The interval 1 to 268 (MKSKFIFITG…GKVLCKLFNI (268 aa)) is amidoligase domain. Residue S14 coordinates CTP. S14 lines the UTP pocket. ATP is bound at residue 15 to 20 (SLGKGL). Y55 serves as a coordination point for L-glutamine. D72 is an ATP binding site. Residues D72 and E142 each contribute to the Mg(2+) site. Residues 149 to 151 (DIE), 189 to 194 (KTKPMQ), and K225 each bind CTP. Residues 189–194 (KTKPMQ) and K225 each bind UTP. Positions 293–535 (TIALVGKYVE…IKAAVDNKIN (243 aa)) constitute a Glutamine amidotransferase type-1 domain. G356 provides a ligand contact to L-glutamine. C383 functions as the Nucleophile; for glutamine hydrolysis in the catalytic mechanism. L-glutamine is bound by residues 384-387 (LGMQ), E407, and R463. Catalysis depends on residues H508 and E510.

This sequence belongs to the CTP synthase family. As to quaternary structure, homotetramer.

The catalysed reaction is UTP + L-glutamine + ATP + H2O = CTP + L-glutamate + ADP + phosphate + 2 H(+). The enzyme catalyses L-glutamine + H2O = L-glutamate + NH4(+). It carries out the reaction UTP + NH4(+) + ATP = CTP + ADP + phosphate + 2 H(+). Its pathway is pyrimidine metabolism; CTP biosynthesis via de novo pathway; CTP from UDP: step 2/2. Its activity is regulated as follows. Allosterically activated by GTP, when glutamine is the substrate; GTP has no effect on the reaction when ammonia is the substrate. The allosteric effector GTP functions by stabilizing the protein conformation that binds the tetrahedral intermediate(s) formed during glutamine hydrolysis. Inhibited by the product CTP, via allosteric rather than competitive inhibition. Its function is as follows. Catalyzes the ATP-dependent amination of UTP to CTP with either L-glutamine or ammonia as the source of nitrogen. Regulates intracellular CTP levels through interactions with the four ribonucleotide triphosphates. The chain is CTP synthase from Treponema denticola (strain ATCC 35405 / DSM 14222 / CIP 103919 / JCM 8153 / KCTC 15104).